The following is a 424-amino-acid chain: Histidine--tRNA ligase (424 aa).

This sequence belongs to the class-II aminoacyl-tRNA synthetase family. In terms of assembly, homodimer.

Its subcellular location is the cytoplasm. The catalysed reaction is tRNA(His) + L-histidine + ATP = L-histidyl-tRNA(His) + AMP + diphosphate + H(+). In Yersinia pestis bv. Antiqua (strain Antiqua), this protein is Histidine--tRNA ligase.